The primary structure comprises 1390 residues: DNA-directed RNA polymerase subunit beta (1390 aa).

The protein belongs to the RNA polymerase beta chain family. In terms of assembly, the RNAP catalytic core consists of 2 alpha, 1 beta, 1 beta' and 1 omega subunit. When a sigma factor is associated with the core the holoenzyme is formed, which can initiate transcription.

The catalysed reaction is RNA(n) + a ribonucleoside 5'-triphosphate = RNA(n+1) + diphosphate. Functionally, DNA-dependent RNA polymerase catalyzes the transcription of DNA into RNA using the four ribonucleoside triphosphates as substrates. The protein is DNA-directed RNA polymerase subunit beta of Gluconobacter oxydans (strain 621H) (Gluconobacter suboxydans).